The following is a 346-amino-acid chain: MAKALVLEKKGQLSLRDIPVRRDLSPTDVLIGIRTVGVCGSDVHYYTHGKIGPFVVNEPMILGHEAAGVVLEVGSQVRHLKKGDRVCMEPGIPDLSSRSSKLGIYNVDPSVRFWATPPVHGCLTPEVVHPAAFTYRLPDHVSFAEGAMVEPFAIGVQAALRAGIRPGDVGAVMGAGPIGMMTALAALAGGCSKVYVADLAQPKLDVIGAYEGIETINVRQQAVSEALAGATGGWGADVVFECSGAAPAILALPSLARPGGTVVLVGMPVEPVPFDIVGMQAKELRIETVFRYANVYDRAIELIASGKVDLKPLISATIPFDESIAAFDRAVEARPTDVKIQIEMPA.

Zn(2+) contacts are provided by Cys39, His64, and Glu150.

Belongs to the zinc-containing alcohol dehydrogenase family. Requires Zn(2+) as cofactor.

It carries out the reaction xylitol + NAD(+) = D-xylulose + NADH + H(+). This Rhizobium meliloti (strain 1021) (Ensifer meliloti) protein is Putative D-xylulose reductase.